We begin with the raw amino-acid sequence, 87 residues long: Putative regulatory protein BCQ_3657 (87 aa).

This sequence belongs to the RemA family.

The polypeptide is Putative regulatory protein BCQ_3657 (Bacillus cereus (strain Q1)).